The chain runs to 148 residues: Endothelial differentiation-related factor 1 (148 aa).

N-acetylalanine is present on Ala2. Phosphoserine is present on Ser4. Lys25 is subject to N6-methyllysine. The disordered stretch occupies residues 34–67 (RGEDVETSKKWAAGQNKQHSITKNTAKLDRETEE). The segment at 37–113 (DVETSKKWAA…QVIADYESGR (77 aa)) is interaction with NR5A2, PPARG and NR1H3. Residues 48–58 (QNKQHSITKNT) show a composition bias toward polar residues. The segment at 69 to 108 (HHDRVTLEVGKVIQRGRQSKGLTQKDLATKINEKPQVIAD) is interaction with TBP and NR5A1. Positions 81 to 88 (IQRGRQSK) match the IQ motif motif. Residues 81-135 (IQRGRQSKGLTQKDLATKINEKPQVIADYESGRAIPNNQVLGKIERAIGLKLRGK) enclose the HTH cro/C1-type domain. A DNA-binding region (H-T-H motif) is located at residues 92-111 (QKDLATKINEKPQVIADYES).

Interacts with TBP and the transcription factor IID (TFIID) complex, NR5A2, NR1H3 and PPARG. Interaction with TBP is regulated by phosphorylation. Binds NR5A1, ATF1, FOS and JUN via their conserved basic region. Binding to calmodulin is regulated by calcium and phosphorylation of the IQ motif. Post-translationally, phosphorylated. In terms of tissue distribution, expressed in brain, liver, kidney and heart (at protein level). Also expressed in testis.

Its subcellular location is the cytoplasm. It localises to the nucleus. Transcriptional coactivator stimulating NR5A1 and ligand-dependent NR1H3/LXRA and PPARG transcriptional activities. Enhances the DNA-binding activity of ATF1, ATF2, CREB1 and NR5A1. Regulates nitric oxid synthase activity probably by sequestering calmodulin in the cytoplasm. Might function in endothelial cells differentiation, hormone-induced cardiomyocytes hypertrophy and lipid metabolism. In Mus musculus (Mouse), this protein is Endothelial differentiation-related factor 1 (Edf1).